An 87-amino-acid chain; its full sequence is Small ribosomal subunit protein bS20 (87 aa).

A disordered region spans residues 1-22 (MANSAQARKRARQAVKQRAHNA). The segment covering 7–19 (ARKRARQAVKQRA) has biased composition (basic residues).

This sequence belongs to the bacterial ribosomal protein bS20 family.

Binds directly to 16S ribosomal RNA. This is Small ribosomal subunit protein bS20 from Methylobacillus flagellatus (strain ATCC 51484 / DSM 6875 / VKM B-1610 / KT).